The sequence spans 132 residues: MTMTDPIADMLSRVRNANNAHHDTVSMPSSKLKANIAEILKQEGYIESYTVEDAKVGKTLTLELKYTGNRVRSIAGLRRVSKPGLRVYAKSTNLPQVLGGLGVAIISTSQGLLTDRQATEKGVGGEVLAYVW.

Belongs to the universal ribosomal protein uS8 family. As to quaternary structure, part of the 30S ribosomal subunit. Contacts proteins S5 and S12.

Functionally, one of the primary rRNA binding proteins, it binds directly to 16S rRNA central domain where it helps coordinate assembly of the platform of the 30S subunit. This chain is Small ribosomal subunit protein uS8, found in Corynebacterium efficiens (strain DSM 44549 / YS-314 / AJ 12310 / JCM 11189 / NBRC 100395).